Reading from the N-terminus, the 287-residue chain is MAARMIGEDDVRKFVPSRRRDSRKGENGKVLVVGGSYIYHGAPIFSSVAALRSGCDLVYTAVPKINAPATRAASPSMIVIPLADQKLTRGAARKLAGQIPTGLDSATIGMGLAIAERSALKVLVVALVDMDVRISLDAGALVREILGDISGKNCLVTPHAGEFKRLFGESPPADIEGRASMVERLAQEHGITILLKGPTDVISDGNRTLLNDRGAPAMTVGGTGDVLSGIAAGILARNRSPLESAAAAAYINGLAGEAAQEMHGLHITAMDLCELLPSVMKPFDRLE.

The YjeF C-terminal domain maps to 7-283; that stretch reads GEDDVRKFVP…ELLPSVMKPF (277 aa). Ala42 and His159 together coordinate (6S)-NADPHX. AMP-binding positions include 196–200 and Gly224; that span reads KGPTD. Asp225 provides a ligand contact to (6S)-NADPHX.

This sequence belongs to the NnrD/CARKD family. As to quaternary structure, homotetramer. The cofactor is Mg(2+).

The enzyme catalyses (6S)-NADHX + ADP = AMP + phosphate + NADH + H(+). It carries out the reaction (6S)-NADPHX + ADP = AMP + phosphate + NADPH + H(+). Its function is as follows. Catalyzes the dehydration of the S-form of NAD(P)HX at the expense of ADP, which is converted to AMP. Together with NAD(P)HX epimerase, which catalyzes the epimerization of the S- and R-forms, the enzyme allows the repair of both epimers of NAD(P)HX, a damaged form of NAD(P)H that is a result of enzymatic or heat-dependent hydration. The protein is ADP-dependent (S)-NAD(P)H-hydrate dehydratase of Cenarchaeum symbiosum (strain A).